The following is a 730-amino-acid chain: Protein folded gastrulation (730 aa).

The signal sequence occupies residues 1–21; sequence MSPPNCLLAVLALTVFIGANN. Residues N51 and N193 are each glycosylated (N-linked (GlcNAc...) asparagine). A compositionally biased stretch (low complexity) spans 197–211; sequence TPETSTSITPTSTTT. The interval 197-222 is disordered; the sequence is TPETSTSITPTSTTTFAVPSVPSGEA. N-linked (GlcNAc...) asparagine glycans are attached at residues N252 and N289. Residues 361-385 show a composition bias toward acidic residues; it reads ELEEEVGEEEVTATDILPSEEDEYT. Residues 361–424 are disordered; that stretch reads ELEEEVGEEE…SPHPPEEPEI (64 aa). Positions 386-415 are enriched in low complexity; that stretch reads TETATTTGDTTVAEASMDTSTATSTSGQSS. The N-linked (GlcNAc...) asparagine glycan is linked to N459. 2 disordered regions span residues 474 to 526 and 545 to 583; these read EDES…GGHK and KGKQRQQHQPQKQQLEPTSTEITSALTSTSTEDATTTTT. A compositionally biased stretch (low complexity) spans 478-491; that stretch reads STTTATPEPSSSTP. Over residues 504 to 513 the composition is skewed to polar residues; that stretch reads DNDNLMTNTI. Over residues 567 to 583 the composition is skewed to low complexity; it reads TSALTSTSTEDATTTTT. N-linked (GlcNAc...) asparagine glycosylation is found at N590 and N639. Residues 663 to 676 are compositionally biased toward low complexity; sequence SAASTESAGTAATT. The segment at 663 to 683 is disordered; that stretch reads SAASTESAGTAATTPNSSSNP. N678 carries an N-linked (GlcNAc...) asparagine glycan.

In terms of processing, may be highly O-glycosylated in its Ser/Thr-rich C-terminal part. As to expression, expressed in the invagination primordia in a pattern that precisely precedes the pattern of constrictions.

It is found in the secreted. It localises to the extracellular space. The protein localises to the extracellular matrix. Functionally, coordinates cell shape changes during formation of the ventral furrow and invagination of the posterior midgut primordium, by inducing apical constriction of cells in spatially and temporally defined manners. Could function as a secreted signal to initiate apical constriction by acting as a ligand for an unidentified G protein-coupled receptor, which in turn activates the G protein alpha subunit encoded by concertina, in neighboring cells. Such an intracellular pathway would ultimately induce contraction of the apical actin-myosin network. In the ventral furrow, fog appears to ensure that all the cells initiate constriction within several minutes of each other. In the posterior midgut invagination, fog appears to direct the ordered progression of constriction initiations out from a central region and also to delimit the peripheral extent of this spreading. This is Protein folded gastrulation (fog) from Drosophila melanogaster (Fruit fly).